The sequence spans 132 residues: uncharacterized protein (132 aa).

Helical transmembrane passes span 15–37, 49–71, 81–103, and 110–129; these read FPEYVAFVVSLSYALNATLLLLY, AFIPVTLSFVAIDFTSIQGLRLF, VILTSLCILEGLALALTSSLALV, and LAATWIAANVASSGLFMAFV.

It localises to the cell membrane. This is an uncharacterized protein from Archaeoglobus fulgidus (strain ATCC 49558 / DSM 4304 / JCM 9628 / NBRC 100126 / VC-16).